A 101-amino-acid chain; its full sequence is Urease subunit beta (101 aa).

It belongs to the urease beta subunit family. As to quaternary structure, heterotrimer of UreA (gamma), UreB (beta) and UreC (alpha) subunits. Three heterotrimers associate to form the active enzyme.

It is found in the cytoplasm. The catalysed reaction is urea + 2 H2O + H(+) = hydrogencarbonate + 2 NH4(+). Its pathway is nitrogen metabolism; urea degradation; CO(2) and NH(3) from urea (urease route): step 1/1. In Roseobacter denitrificans (strain ATCC 33942 / OCh 114) (Erythrobacter sp. (strain OCh 114)), this protein is Urease subunit beta.